The following is a 336-amino-acid chain: Dihydroorotate dehydrogenase (quinone) (336 aa).

FMN is bound by residues A62 to K66 and T86. Residue K66 participates in substrate binding. N111–F115 is a substrate binding site. Residues N139 and N172 each contribute to the FMN site. N172 is a substrate binding site. S175 (nucleophile) is an active-site residue. A substrate-binding site is contributed by N177. Positions 217 and 245 each coordinate FMN. N246–T247 lines the substrate pocket. Residues G268, G297, and Y318–S319 contribute to the FMN site.

Belongs to the dihydroorotate dehydrogenase family. Type 2 subfamily. As to quaternary structure, monomer. FMN serves as cofactor.

It is found in the cell membrane. It catalyses the reaction (S)-dihydroorotate + a quinone = orotate + a quinol. The protein operates within pyrimidine metabolism; UMP biosynthesis via de novo pathway; orotate from (S)-dihydroorotate (quinone route): step 1/1. Its function is as follows. Catalyzes the conversion of dihydroorotate to orotate with quinone as electron acceptor. The polypeptide is Dihydroorotate dehydrogenase (quinone) (Vibrio atlanticus (strain LGP32) (Vibrio splendidus (strain Mel32))).